The following is a 258-amino-acid chain: 1-(5-phosphoribosyl)-5-[(5-phosphoribosylamino)methylideneamino] imidazole-4-carboxamide isomerase 2 (258 aa).

The active-site Proton acceptor is the aspartate 14. Aspartate 140 (proton donor) is an active-site residue.

Belongs to the HisA/HisF family.

It is found in the cytoplasm. The catalysed reaction is 1-(5-phospho-beta-D-ribosyl)-5-[(5-phospho-beta-D-ribosylamino)methylideneamino]imidazole-4-carboxamide = 5-[(5-phospho-1-deoxy-D-ribulos-1-ylimino)methylamino]-1-(5-phospho-beta-D-ribosyl)imidazole-4-carboxamide. The protein operates within amino-acid biosynthesis; L-histidine biosynthesis; L-histidine from 5-phospho-alpha-D-ribose 1-diphosphate: step 4/9. The polypeptide is 1-(5-phosphoribosyl)-5-[(5-phosphoribosylamino)methylideneamino] imidazole-4-carboxamide isomerase 2 (hisA2) (Photorhabdus laumondii subsp. laumondii (strain DSM 15139 / CIP 105565 / TT01) (Photorhabdus luminescens subsp. laumondii)).